The chain runs to 336 residues: Protein SphX (336 aa).

A signal peptide spans 1–27; it reads MFDLSRLSRGIVPMALLLLGISACTPS.

Belongs to the PstS family.

Its function is as follows. May be involved in the system for phosphate transport across the cytoplasmic membrane. This Synechocystis sp. (strain ATCC 27184 / PCC 6803 / Kazusa) protein is Protein SphX (sphX).